A 372-amino-acid chain; its full sequence is N-acetylneuraminate epimerase 1 (372 aa).

Positions 1–25 are cleaved as a signal peptide; sequence MITMKVKNFIYLPFCLFIGTSVAGA. Kelch repeat units follow at residues 44 to 88, 90 to 141, 143 to 177, 178 to 223, 226 to 269, 291 to 340, and 342 to 371; these read KIYI…TIID, KIYV…FIHN, HAVS…KVNR, DYFS…IFAE, IYIL…VSGA, EKYS…PWQG, and MLIL…IKIV. Glu-232 functions as the Proton acceptor in the catalytic mechanism.

It belongs to the NanM family. Homodimer.

Its subcellular location is the periplasm. The enzyme catalyses N-acetyl-alpha-neuraminate = N-acetyl-beta-neuraminate. Its function is as follows. Converts alpha-N-acetylneuranimic acid (Neu5Ac) to the beta-anomer, accelerating the equilibrium between the alpha- and beta-anomers. Probably facilitates sialidase-negative bacteria to compete successfully for limited amounts of extracellular Neu5Ac, which is likely taken up in the beta-anomer. In addition, the rapid removal of sialic acid from solution might be advantageous to the bacterium to damp down host responses. The polypeptide is N-acetylneuraminate epimerase 1 (Escherichia coli O6:H1 (strain CFT073 / ATCC 700928 / UPEC)).